The following is a 69-amino-acid chain: Arabinogalactan protein 24 (69 aa).

The first 25 residues, 1–25 (MMMMTKMFVQIAVVCLLATMAVVSA), serve as a signal peptide directing secretion. 4-hydroxyproline occurs at positions 34, 36, 38, and 40. O-linked (Ara...) hydroxyproline glycosylation is found at Pro-34, Pro-36, Pro-38, and Pro-40. The GPI-anchor amidated serine moiety is linked to residue Ser-42. Positions 43 to 69 (SSTVVSATNMFTVLAIAAVALVVGSNH) are cleaved as a propeptide — removed in mature form.

The protein belongs to the AG-peptide AGP family. In terms of processing, contains 4-hydroxyproline; hydroxylated on Pro-34, Pro-36, Pro-38 and Pro-40. O-glycosylated on hydroxyprolines; noncontiguous hydroxylproline residues are glycosylated with arabinogalactan.

The protein resides in the cell membrane. In terms of biological role, proteoglycan that seems to be implicated in diverse developmental roles such as differentiation, cell-cell recognition, embryogenesis and programmed cell death. This is Arabinogalactan protein 24 from Arabidopsis thaliana (Mouse-ear cress).